The primary structure comprises 286 residues: uncharacterized protein (286 aa).

The disordered stretch occupies residues 152-182; that stretch reads YPSTTTSVTPGKKGEKTTKVDGFSSPLNQDT. The helical transmembrane segment at 198–218 threads the bilayer; sequence VLIAVTLFVSGIAITVFVIFE. The segment at 239 to 278 is disordered; it reads RRPRKEDQQPGTAESQSDTQPKKVGQEAPNSSSPKKAVEI. Over residues 247 to 257 the composition is skewed to polar residues; it reads QPGTAESQSDT.

The protein resides in the membrane. This is an uncharacterized protein from Bos taurus (Bovine).